The chain runs to 184 residues: ATP-dependent protease subunit HslV (184 aa).

The active site involves Thr11. Na(+) is bound by residues Ala165, Cys168, and Thr171.

The protein belongs to the peptidase T1B family. HslV subfamily. A double ring-shaped homohexamer of HslV is capped on each side by a ring-shaped HslU homohexamer. The assembly of the HslU/HslV complex is dependent on binding of ATP.

Its subcellular location is the cytoplasm. It carries out the reaction ATP-dependent cleavage of peptide bonds with broad specificity.. Allosterically activated by HslU binding. Its function is as follows. Protease subunit of a proteasome-like degradation complex believed to be a general protein degrading machinery. The polypeptide is ATP-dependent protease subunit HslV (Zymomonas mobilis subsp. mobilis (strain ATCC 31821 / ZM4 / CP4)).